Consider the following 370-residue polypeptide: 4-hydroxy-3-methylbut-2-en-1-yl diphosphate synthase (flavodoxin) (370 aa).

Residues Cys268, Cys271, Cys303, and Glu310 each coordinate [4Fe-4S] cluster.

Belongs to the IspG family. The cofactor is [4Fe-4S] cluster.

It catalyses the reaction (2E)-4-hydroxy-3-methylbut-2-enyl diphosphate + oxidized [flavodoxin] + H2O + 2 H(+) = 2-C-methyl-D-erythritol 2,4-cyclic diphosphate + reduced [flavodoxin]. The protein operates within isoprenoid biosynthesis; isopentenyl diphosphate biosynthesis via DXP pathway; isopentenyl diphosphate from 1-deoxy-D-xylulose 5-phosphate: step 5/6. Functionally, converts 2C-methyl-D-erythritol 2,4-cyclodiphosphate (ME-2,4cPP) into 1-hydroxy-2-methyl-2-(E)-butenyl 4-diphosphate. The protein is 4-hydroxy-3-methylbut-2-en-1-yl diphosphate synthase (flavodoxin) of Bacillus anthracis (strain A0248).